The primary structure comprises 189 residues: Streptothricin acetyltransferase (189 aa).

The region spanning 44–189 (FALREVPADP…HALYMSMPCP (146 aa)) is the N-acetyltransferase domain. The interval 55–76 (LVKVFPDDGGSDGEDGAEGEDA) is disordered. Residues 63–75 (GGSDGEDGAEGED) are compositionally biased toward acidic residues.

Belongs to the acetyltransferase family. GNAT subfamily.

The enzyme catalyses streptothricin F + acetyl-CoA = N(beta)-acetylstreptothricin F + CoA + H(+). Functionally, involved in resistance to streptothricin, a broad-spectrum antibiotic produced by streptomycetes. Detoxifies streptothricin via acetylation of the beta amino group of the first beta-lysyl moiety of streptothricin. The chain is Streptothricin acetyltransferase from Streptomyces lavendulae.